The chain runs to 258 residues: Deoxyribose-phosphate aldolase (258 aa).

The Proton donor/acceptor role is filled by Asp102. Lys165 acts as the Schiff-base intermediate with acetaldehyde in catalysis. Residue Lys199 is the Proton donor/acceptor of the active site.

The protein belongs to the DeoC/FbaB aldolase family. DeoC type 2 subfamily.

The protein resides in the cytoplasm. It carries out the reaction 2-deoxy-D-ribose 5-phosphate = D-glyceraldehyde 3-phosphate + acetaldehyde. The protein operates within carbohydrate degradation; 2-deoxy-D-ribose 1-phosphate degradation; D-glyceraldehyde 3-phosphate and acetaldehyde from 2-deoxy-alpha-D-ribose 1-phosphate: step 2/2. Functionally, catalyzes a reversible aldol reaction between acetaldehyde and D-glyceraldehyde 3-phosphate to generate 2-deoxy-D-ribose 5-phosphate. The chain is Deoxyribose-phosphate aldolase from Aliivibrio fischeri (strain MJ11) (Vibrio fischeri).